Reading from the N-terminus, the 159-residue chain is Ribonuclease P protein component 2 (159 aa).

Belongs to the eukaryotic/archaeal RNase P protein component 2 family. Consists of a catalytic RNA component and at least 4-5 protein subunits.

The protein localises to the cytoplasm. It catalyses the reaction Endonucleolytic cleavage of RNA, removing 5'-extranucleotides from tRNA precursor.. Part of ribonuclease P, a protein complex that generates mature tRNA molecules by cleaving their 5'-ends. The sequence is that of Ribonuclease P protein component 2 from Halorubrum lacusprofundi (strain ATCC 49239 / DSM 5036 / JCM 8891 / ACAM 34).